A 321-amino-acid chain; its full sequence is Opticin (321 aa).

Residues 1–19 (MKLLALLSLLILMLQEART) form the signal peptide. At Y61 the chain carries Sulfotyrosine. The region spanning 105 to 142 (LLAAPANHGLPTCLICVCLGSSVYCDDADLENIPPLPQ) is the LRRNT domain. 6 LRR repeats span residues 143 to 164 (TTAY…DFKG), 167 to 188 (KLKR…ALRL), 191 to 212 (ALRD…PTSI), 237 to 258 (KLQF…LPLS), 259 to 279 (LRSL…AFCD), and 289 to 309 (PLED…PSAY). C278 and C311 are joined by a disulfide. N-linked (GlcNAc...) asparagine glycosylation is present at N301.

Belongs to the small leucine-rich proteoglycan (SLRP) family. SLRP class III subfamily. Homodimer. In terms of processing, O-glycosylated (sialylated oligosaccharides). Sulfated on tyrosine residues. Post-translationally, proteolytically cleaved by MMP1, MMP2, MMP3, MMP7, MMP8, MMP9, ADAMTS4, and ADAMTS5. Proteolytically cleaved by MMP13.

It is found in the secreted. The protein resides in the extracellular space. It localises to the extracellular matrix. Its function is as follows. Inhibits angiogenesis in the vitreous humor of the eye, and therefore represses neovascularization. Binds collagen fibrils. May be involved in collagen fiber organization via regulation of other members of the small leucine-rich repeat proteoglycan superfamily. This Bos taurus (Bovine) protein is Opticin (OPTC).